Here is a 169-residue protein sequence, read N- to C-terminus: Protein yop1 (169 aa).

At 1 to 35 the chain is on the cytoplasmic side; the sequence is MASFQDRAQHTIAQLDKELSKYPVLNNLERQTSVP. The chain crosses the membrane as a helical span at residues 36–55; it reads KVYVILGLVGIYTFLVFFNI. A topological domain (lumenal) is located at residue Ala56. The chain crosses the membrane as a helical span at residues 57 to 76; it reads GEFLVNFAGFLIPGYYSLNA. The Cytoplasmic segment spans residues 77-86; the sequence is LFTSGKADDT. A helical transmembrane segment spans residues 87-103; sequence QWLTYWVVYALLTVVES. Residues 104-105 are Lumenal-facing; sequence AI. The helical transmembrane segment at 106 to 124 threads the bilayer; sequence NAAYWFPFYYIFKFVLILW. Over 125–169 the chain is Cytoplasmic; that stretch reads MSLPQTNGAQVVFHSFLQPVLGRFFTSGSTSANLRAQADAASKSQ.

Belongs to the DP1 family. In terms of assembly, oligomer.

The protein localises to the endoplasmic reticulum membrane. It is found in the golgi apparatus membrane. In terms of biological role, required to generate and maintain the structure of the tubular endoplasmic reticulum network and the vacuole. Induces high curvature in membranes and causes membrane tubule formation. Involved in membrane/vesicle trafficking. This Aspergillus fumigatus (strain ATCC MYA-4609 / CBS 101355 / FGSC A1100 / Af293) (Neosartorya fumigata) protein is Protein yop1 (yop1).